Consider the following 360-residue polypeptide: S-adenosylmethionine-dependent nucleotide dehydratase RSAD2 (360 aa).

Residues 44–71 (KGQPRVRGEPKETQETHEDPGSAQPTTP) are disordered. Residues 49–63 (VRGEPKETQETHEDP) are compositionally biased toward basic and acidic residues. Residues 68 to 288 (PTTPVSVNYH…LQRHKDVSCL (221 aa)) enclose the Radical SAM core domain. [4Fe-4S] cluster contacts are provided by C82, C86, and C89. N6-acetyllysine is present on K196. K205 participates in a covalent cross-link: Glycyl lysine isopeptide (Lys-Gly) (interchain with G-Cter in ubiquitin).

It belongs to the radical SAM superfamily. RSAD2 family. Homodimer. Interacts with IRAK1 and TRAF6. Interacts with FPPS. Interacts with HADHB. Interacts (via C-terminus) with VAPA/VAP33 (via C-terminus). [4Fe-4S] cluster serves as cofactor. Acetylated by HAT1. HAT1-mediated acetylation of Lys-196 in turn recruits UBE4A that stimulates RSAD2 polyubiquitination leading to proteasomal degradation. Post-translationally, 'Lys-6'-linked polyubiquitination at Lys-205 leads to RSAD2 protein degradation. As to expression, in neonatal rat tibia, specifically localized in cells of the periosteum, in osteoblasts lining endosteal and peristeal bone surfaces, to articular surfaces of cartilage and in perichondral cells but not in chondrocytes (at protein level). Expressed predominantly in bone marrow and spleen.

The protein resides in the endoplasmic reticulum membrane. Its subcellular location is the golgi apparatus. It localises to the endoplasmic reticulum. It is found in the lipid droplet. The protein localises to the mitochondrion. The protein resides in the mitochondrion inner membrane. Its subcellular location is the mitochondrion outer membrane. The enzyme catalyses CTP + AH2 + S-adenosyl-L-methionine = 3'-deoxy-3',4'-didehydro-CTP + 5'-deoxyadenosine + L-methionine + A + H2O + H(+). With respect to regulation, IRAK1 and TRAF6 synergistically activate RSAD2 increasing its activity with CTP as substrate about 10-fold. In terms of biological role, interferon-inducible antiviral protein which plays a major role in the cell antiviral state induced by type I and type II interferon. Catalyzes the conversion of cytidine triphosphate (CTP) to 3'-deoxy-3',4'-didehydro-CTP (ddhCTP) via a SAM-dependent radical mechanism. In turn, ddhCTP acts as a chain terminator for the RNA-dependent RNA polymerases from multiple viruses and directly inhibits viral replication. Therefore, inhibits a wide range of DNA and RNA viruses. Also promotes TLR7 and TLR9-dependent production of IFN-beta production in plasmacytoid dendritic cells (pDCs) by facilitating 'Lys-63'-linked ubiquitination of IRAK1 by TRAF6. Plays a role in CD4+ T-cells activation and differentiation. Facilitates T-cell receptor (TCR)-mediated GATA3 activation and optimal T-helper 2 (Th2) cytokine production by modulating NFKB1 and JUNB activities. Can inhibit secretion of soluble proteins. This chain is S-adenosylmethionine-dependent nucleotide dehydratase RSAD2, found in Rattus norvegicus (Rat).